A 187-amino-acid polypeptide reads, in one-letter code: MNLQHHFLIAMPALQDPIFRRSVVYICEHNQDGAMGIIINKPLENLQIEGILEKLKITPEPRDSAIRLDKAVMLGGPLAEDRGFILHTPPSRFASSIRISDNTVITTSRDVLETLGTQQQPSDVLVALGYASWDKGQLEQELLDNAWLTAPADLNILFKTPIAERWREAAKLIGIDILTMPGVAGHA.

The protein belongs to the UPF0301 (AlgH) family.

This Salmonella heidelberg (strain SL476) protein is UPF0301 protein YqgE.